Consider the following 458-residue polypeptide: Carboxypeptidase N catalytic chain (458 aa).

An N-terminal signal peptide occupies residues 1–20; sequence MSDLLSVFLHLLLLFKLVAP. The 315-residue stretch at 24–338 folds into the Peptidase M14 domain; it reads RHHRYDDLVR…EALIQFLEQV (315 aa). A disulfide bridge connects residues Cys-42 and Cys-104. Residues His-86, Glu-89, and His-216 each coordinate Zn(2+). Residues Cys-271 and Cys-311 are joined by a disulfide bond. Residue Glu-308 is the Proton donor/acceptor of the active site. O-linked (GalNAc...) threonine glycosylation is found at Thr-400, Thr-402, and Thr-409. The segment at 423 to 458 is disordered; that stretch reads SPVRRAPSRRHGVRAKVQPQARKKEMEMRQLQRGPA.

Belongs to the peptidase M14 family. Tetramer of two catalytic chains and two glycosylated inactive chains. Zn(2+) serves as cofactor. In terms of tissue distribution, synthesized in the liver and secreted in plasma.

The protein resides in the secreted. The protein localises to the extracellular space. It carries out the reaction Release of a C-terminal basic amino acid, preferentially lysine.. In terms of biological role, protects the body from potent vasoactive and inflammatory peptides containing C-terminal Arg or Lys (such as kinins or anaphylatoxins) which are released into the circulation. In Homo sapiens (Human), this protein is Carboxypeptidase N catalytic chain (CPN1).